The sequence spans 53 residues: uncharacterized protein (53 aa).

Residues 18–38 (FLFFIFYFLFFFIFFTVFGNL) traverse the membrane as a helical segment.

Its subcellular location is the membrane. This is an uncharacterized protein from Dictyostelium discoideum (Social amoeba).